A 918-amino-acid chain; its full sequence is DNA mismatch repair protein MutS (918 aa).

662–669 (GPNMAGKS) contributes to the ATP binding site.

Belongs to the DNA mismatch repair MutS family.

This protein is involved in the repair of mismatches in DNA. It is possible that it carries out the mismatch recognition step. This protein has a weak ATPase activity. The sequence is that of DNA mismatch repair protein MutS from Sorangium cellulosum (strain So ce56) (Polyangium cellulosum (strain So ce56)).